A 99-amino-acid polypeptide reads, in one-letter code: MSLLDFFLKSRKENTAKLAKERLQIIVAHERTSRSGPDYLPQLKQDILDVIRKYVQIDPEQVTVQLDKKGEQLSVLELNIMLSDDKPQNADDNTEETKS.

Belongs to the MinE family.

Functionally, prevents the cell division inhibition by proteins MinC and MinD at internal division sites while permitting inhibition at polar sites. This ensures cell division at the proper site by restricting the formation of a division septum at the midpoint of the long axis of the cell. The protein is Cell division topological specificity factor of Tolumonas auensis (strain DSM 9187 / NBRC 110442 / TA 4).